We begin with the raw amino-acid sequence, 324 residues long: GTPase Era (324 aa).

The Era-type G domain occupies 31–199 (KSGFIGIIGR…QELLVEHLEH (169 aa)). The interval 39-46 (GRPNVGKS) is G1. 39–46 (GRPNVGKS) contributes to the GTP binding site. A G2 region spans residues 65 to 69 (QTTRN). Residues 86-89 (DTPG) are G3. Residues 86–90 (DTPGI) and 148–151 (NKVD) contribute to the GTP site. A G4 region spans residues 148-151 (NKVD). A G5 region spans residues 178–180 (FSA). Positions 230–306 (TREEVPHSVA…YLELFVKVQP (77 aa)) constitute a KH type-2 domain.

This sequence belongs to the TRAFAC class TrmE-Era-EngA-EngB-Septin-like GTPase superfamily. Era GTPase family. As to quaternary structure, monomer.

Its subcellular location is the cytoplasm. The protein localises to the cell inner membrane. An essential GTPase that binds both GDP and GTP, with rapid nucleotide exchange. Plays a role in 16S rRNA processing and 30S ribosomal subunit biogenesis and possibly also in cell cycle regulation and energy metabolism. The protein is GTPase Era of Nostoc sp. (strain PCC 7120 / SAG 25.82 / UTEX 2576).